The chain runs to 121 residues: uncharacterized protein (121 aa).

Residues 11 to 31 form a helical membrane-spanning segment; sequence IFQFFVFPFYYFLLIITEIGF.

It localises to the membrane. This is an uncharacterized protein from Schizosaccharomyces pombe (strain 972 / ATCC 24843) (Fission yeast).